We begin with the raw amino-acid sequence, 153 residues long: UPF0225 protein ETA_15740 (153 aa).

It belongs to the UPF0225 family.

The polypeptide is UPF0225 protein ETA_15740 (Erwinia tasmaniensis (strain DSM 17950 / CFBP 7177 / CIP 109463 / NCPPB 4357 / Et1/99)).